We begin with the raw amino-acid sequence, 774 residues long: DNA ligase (774 aa).

NAD(+) contacts are provided by residues 36–40 (DAVYD), 85–86 (SL), and E161. Catalysis depends on K163, which acts as the N6-AMP-lysine intermediate. Residues R184, E221, K341, and K365 each coordinate NAD(+). Zn(2+) is bound by residues C459, C462, C477, and C482. The region spanning 693 to 774 (VQSGLLRGKT…LLEALAVTGI (82 aa)) is the BRCT domain.

Belongs to the NAD-dependent DNA ligase family. LigA subfamily. Mg(2+) serves as cofactor. The cofactor is Mn(2+).

The enzyme catalyses NAD(+) + (deoxyribonucleotide)n-3'-hydroxyl + 5'-phospho-(deoxyribonucleotide)m = (deoxyribonucleotide)n+m + AMP + beta-nicotinamide D-nucleotide.. DNA ligase that catalyzes the formation of phosphodiester linkages between 5'-phosphoryl and 3'-hydroxyl groups in double-stranded DNA using NAD as a coenzyme and as the energy source for the reaction. It is essential for DNA replication and repair of damaged DNA. This is DNA ligase from Trichodesmium erythraeum (strain IMS101).